The chain runs to 157 residues: Cytochrome c-type biogenesis protein CcmE (157 aa).

Over 1 to 8 (MNPLRRKR) the chain is Cytoplasmic. Residues 9–29 (LLIILAVLGGVGLALTLALSA) form a helical; Signal-anchor for type II membrane protein membrane-spanning segment. At 30 to 157 (LKENINLFYT…ASMPARQADR (128 aa)) the chain is on the periplasmic side. Histidine 124 and tyrosine 128 together coordinate heme. Residues 132–157 (EVSKALRESGQATPAPASMPARQADR) are disordered.

It belongs to the CcmE/CycJ family.

Its subcellular location is the cell inner membrane. In terms of biological role, heme chaperone required for the biogenesis of c-type cytochromes. Transiently binds heme delivered by CcmC and transfers the heme to apo-cytochromes in a process facilitated by CcmF and CcmH. In Pseudomonas syringae pv. tomato (strain ATCC BAA-871 / DC3000), this protein is Cytochrome c-type biogenesis protein CcmE.